The primary structure comprises 75 residues: Insecticidal toxin OcyC10 (75 aa).

The first 19 residues, 1 to 19, serve as a signal peptide directing secretion; it reads MNFATKIVILLLVAALILA. Intrachain disulfides connect Cys-50/Cys-62 and Cys-56/Cys-68.

In terms of tissue distribution, expressed by the venom gland.

It localises to the secreted. Its function is as follows. Insecticidal toxin. This Opisthacanthus cayaporum (South American scorpion) protein is Insecticidal toxin OcyC10.